The primary structure comprises 115 residues: MDDDEELERIRRQQLESMQRQAMQEQMREEQEKQREAERARRQQILRQILDPSARERLNNVRLVRPDLADNVENQLIQLASMGRINRMLSERDIIDILSKLTENKREPKIERRSK.

Residues methionine 1 to arginine 41 form a disordered region. Low complexity predominate over residues leucine 15–glutamate 25. Residues glutamine 26–arginine 41 show a composition bias toward basic and acidic residues.

Belongs to the PDCD5 family.

The protein is DNA-binding protein Ta0052 of Thermoplasma acidophilum (strain ATCC 25905 / DSM 1728 / JCM 9062 / NBRC 15155 / AMRC-C165).